The following is a 124-amino-acid chain: UPF0102 protein Rcas_2007 (124 aa).

It belongs to the UPF0102 family.

The polypeptide is UPF0102 protein Rcas_2007 (Roseiflexus castenholzii (strain DSM 13941 / HLO8)).